The primary structure comprises 537 residues: Phosphoenolpyruvate carboxykinase (ATP) (537 aa).

3 residues coordinate substrate: Arg61, Tyr195, and Lys201. Residues Lys201, His220, and 236–244 each bind ATP; that span reads GLSGTGKTT. Residues Lys201 and His220 each coordinate Mn(2+). Asp257 serves as a coordination point for Mn(2+). The ATP site is built by Glu285, Arg323, and Thr448. A substrate-binding site is contributed by Arg323.

The protein belongs to the phosphoenolpyruvate carboxykinase (ATP) family. It depends on Mn(2+) as a cofactor.

The protein localises to the cytoplasm. It carries out the reaction oxaloacetate + ATP = phosphoenolpyruvate + ADP + CO2. It participates in carbohydrate biosynthesis; gluconeogenesis. Involved in the gluconeogenesis. Catalyzes the conversion of oxaloacetate (OAA) to phosphoenolpyruvate (PEP) through direct phosphoryl transfer between the nucleoside triphosphate and OAA. The polypeptide is Phosphoenolpyruvate carboxykinase (ATP) (Parvibaculum lavamentivorans (strain DS-1 / DSM 13023 / NCIMB 13966)).